The sequence spans 25 residues: Chitinolytic alpha-amylase inhibitor PvCAI (25 aa).

Homodimer.

It catalyses the reaction Random endo-hydrolysis of N-acetyl-beta-D-glucosaminide (1-&gt;4)-beta-linkages in chitin and chitodextrins.. Alpha-amylase inhibitor, active against Z.subfasciatus alpha-amylase (ZSA) but not porcine pancreatic alpha-amylase (PPA). Has chitinase activity. The sequence is that of Chitinolytic alpha-amylase inhibitor PvCAI from Phaseolus vulgaris (Kidney bean).